The primary structure comprises 320 residues: GTP 3',8-cyclase (320 aa).

The region spanning 5-222 (KLSRPLKVLR…LMKKEFTFYP (218 aa)) is the Radical SAM core domain. R14 is a GTP binding site. [4Fe-4S] cluster is bound by residues C21, C25, and C28. R65 is a GTP binding site. G69 is an S-adenosyl-L-methionine binding site. T96 contacts GTP. S120 is an S-adenosyl-L-methionine binding site. Residue K157 coordinates GTP. S-adenosyl-L-methionine is bound at residue M191. 2 residues coordinate [4Fe-4S] cluster: C253 and C256. Residue 258–260 (RIR) participates in GTP binding. A [4Fe-4S] cluster-binding site is contributed by C270.

Belongs to the radical SAM superfamily. MoaA family. As to quaternary structure, monomer and homodimer. The cofactor is [4Fe-4S] cluster.

It catalyses the reaction GTP + AH2 + S-adenosyl-L-methionine = (8S)-3',8-cyclo-7,8-dihydroguanosine 5'-triphosphate + 5'-deoxyadenosine + L-methionine + A + H(+). It functions in the pathway cofactor biosynthesis; molybdopterin biosynthesis. Its function is as follows. Catalyzes the cyclization of GTP to (8S)-3',8-cyclo-7,8-dihydroguanosine 5'-triphosphate. The protein is GTP 3',8-cyclase of Aquifex aeolicus (strain VF5).